The sequence spans 286 residues: Plasma membrane ascorbate-dependent reductase CYBRD1 (286 aa).

Over 1-7 (MAMEGYR) the chain is Cytoplasmic. The helical transmembrane segment at 8-32 (GFLGLLVSALLVGFLSVIFVLIWVL) threads the bilayer. In terms of domain architecture, Cytochrome b561 spans 15-220 (SALLVGFLSV…FGALIFWIVT (206 aa)). The Extracellular segment spans residues 33–47 (HFREGLGWDGGALEF). A helical membrane pass occupies residues 48 to 69 (NWHPVLAVTGFVFIQGIAIIVY). Positions 50, 70, and 79 each coordinate heme b. At 70 to 78 (RLPWTWKCS) the chain is on the cytoplasmic side. Residues Lys79 and Lys83 each coordinate L-ascorbate. Residues 79 to 105 (KFLMKSIHAGLNAVAAILAIISVVAVF) form a helical membrane-spanning segment. His86 is a binding site for heme b. The Extracellular segment spans residues 106 to 118 (DYHNVRKIPHMYS). His108 serves as a coordination point for Fe(3+). Residues 115-118 (HMYS) and His120 contribute to the heme b site. The helical transmembrane segment at 119–144 (LHSWVGLTVLILYIQQLVVGFFIFLL) threads the bilayer. The Cytoplasmic segment spans residues 145 to 151 (PWAPPSL). Position 152 (Arg152) interacts with L-ascorbate. Residues 152 to 179 (RAIVMPIHVYSGLLLFGTVIATVLMGVT) form a helical membrane-spanning segment. Positions 159 and 180 each coordinate heme b. Topologically, residues 180 to 197 (EKLFFVLKNPSYHSFPPE) are extracellular. A helical transmembrane segment spans residues 198-222 (GVFTNTLGLLILVFGALIFWIVTRP). The Cytoplasmic portion of the chain corresponds to 223–286 (QWKRPREPGS…LVDTGQRSTM (64 aa)). Lys225 contacts heme b. Ser232 bears the Phosphoserine mark. Thr285 bears the Phosphothreonine mark.

As to quaternary structure, homodimer. Requires heme b as cofactor. Highly expressed in all regions of the small intestine and colon studied in suckling animals. However, after weaning, when iron absorption declines significantly, strong expression is retained only in the duodenum. Also expressed in respiratory epithelium.

The protein resides in the cell membrane. Its subcellular location is the apical cell membrane. The catalysed reaction is Fe(3+)(out) + L-ascorbate(in) = monodehydro-L-ascorbate radical(in) + Fe(2+)(out) + H(+). It carries out the reaction Cu(2+)(out) + L-ascorbate(in) = Cu(+)(out) + monodehydro-L-ascorbate radical(in) + H(+). The enzyme catalyses monodehydro-L-ascorbate radical(out) + L-ascorbate(in) = monodehydro-L-ascorbate radical(in) + L-ascorbate(out). Plasma membrane reductase that uses cytoplasmic ascorbate as an electron donor to reduce extracellular Fe(3+) into Fe(2+). Probably functions in dietary iron absorption at the brush border of duodenal enterocytes by producing Fe(2+), the divalent form of iron that can be transported into enterocytes. It is also able to reduce extracellular monodehydro-L-ascorbate and may be involved in extracellular ascorbate regeneration by erythrocytes in blood. May also act as a ferrireductase in airway epithelial cells. May also function as a cupric transmembrane reductase. This chain is Plasma membrane ascorbate-dependent reductase CYBRD1, found in Rattus norvegicus (Rat).